Reading from the N-terminus, the 119-residue chain is Large ribosomal subunit protein uL18 (119 aa).

It belongs to the universal ribosomal protein uL18 family. As to quaternary structure, part of the 50S ribosomal subunit; part of the 5S rRNA/L5/L18/L25 subcomplex. Contacts the 5S and 23S rRNAs.

Its function is as follows. This is one of the proteins that bind and probably mediate the attachment of the 5S RNA into the large ribosomal subunit, where it forms part of the central protuberance. In Clostridium kluyveri (strain ATCC 8527 / DSM 555 / NBRC 12016 / NCIMB 10680 / K1), this protein is Large ribosomal subunit protein uL18.